Here is a 388-residue protein sequence, read N- to C-terminus: AT-rich binding protein (388 aa).

A C2H2-type 1 zinc finger spans residues 29–52 (IVCHTCQEELQTQDQFWKHIQDEH). 2 stretches are compositionally biased toward low complexity: residues 138–165 (QQHQ…LQQQ) and 249–265 (VSVS…STTP). Disordered stretches follow at residues 138 to 168 (QQHQ…QRDV) and 240 to 265 (PPPP…STTP). 2 C2H2-type zinc fingers span residues 321–345 (YVCD…RVVH) and 351–374 (FNCE…KKKH).

It is found in the nucleus. In terms of biological role, may be a transcription factor for genes having (A+T) stretches in their promoter and/or enhancer regions. Binds to AT rich DNA. The polypeptide is AT-rich binding protein (Drosophila melanogaster (Fruit fly)).